Consider the following 185-residue polypeptide: Photosystem I assembly protein Ycf4 (185 aa).

2 helical membrane-spanning segments follow: residues 20–40 (GNFF…SVGA) and 57–77 (ILFF…LFIS).

This sequence belongs to the Ycf4 family.

The protein localises to the plastid. It is found in the chloroplast thylakoid membrane. In terms of biological role, seems to be required for the assembly of the photosystem I complex. This Lolium perenne (Perennial ryegrass) protein is Photosystem I assembly protein Ycf4.